A 361-amino-acid chain; its full sequence is DNA replication and repair protein RecF (361 aa).

30-37 (GANGSGKT) provides a ligand contact to ATP.

The protein belongs to the RecF family.

It localises to the cytoplasm. In terms of biological role, the RecF protein is involved in DNA metabolism; it is required for DNA replication and normal SOS inducibility. RecF binds preferentially to single-stranded, linear DNA. It also seems to bind ATP. In Glaesserella parasuis serovar 5 (strain SH0165) (Haemophilus parasuis), this protein is DNA replication and repair protein RecF.